The primary structure comprises 876 residues: Alanine--tRNA ligase (876 aa).

Zn(2+) is bound by residues His568, His572, Cys670, and His674.

The protein belongs to the class-II aminoacyl-tRNA synthetase family. Requires Zn(2+) as cofactor.

It is found in the cytoplasm. The catalysed reaction is tRNA(Ala) + L-alanine + ATP = L-alanyl-tRNA(Ala) + AMP + diphosphate. Catalyzes the attachment of alanine to tRNA(Ala) in a two-step reaction: alanine is first activated by ATP to form Ala-AMP and then transferred to the acceptor end of tRNA(Ala). Also edits incorrectly charged Ser-tRNA(Ala) and Gly-tRNA(Ala) via its editing domain. In Geotalea uraniireducens (strain Rf4) (Geobacter uraniireducens), this protein is Alanine--tRNA ligase.